A 577-amino-acid chain; its full sequence is Arginine--tRNA ligase (577 aa).

Residues 122–132 (PNVAKEMHVGH) carry the 'HIGH' region motif.

Belongs to the class-I aminoacyl-tRNA synthetase family. As to quaternary structure, monomer.

The protein localises to the cytoplasm. The catalysed reaction is tRNA(Arg) + L-arginine + ATP = L-arginyl-tRNA(Arg) + AMP + diphosphate. This is Arginine--tRNA ligase from Salmonella gallinarum (strain 287/91 / NCTC 13346).